A 345-amino-acid polypeptide reads, in one-letter code: Probable fructokinase-3 (345 aa).

Belongs to the carbohydrate kinase PfkB family.

The catalysed reaction is D-fructose + ATP = D-fructose 6-phosphate + ADP + H(+). It functions in the pathway glycan biosynthesis; starch biosynthesis. In terms of biological role, may play an important role in maintaining the flux of carbon towards starch formation. The polypeptide is Probable fructokinase-3 (Arabidopsis thaliana (Mouse-ear cress)).